The primary structure comprises 502 residues: Cytochrome P450 monooxygenase verC (502 aa).

The chain crosses the membrane as a helical span at residues 9 to 29 (IAALPMVSLLGAALIVVSVLG). N-linked (GlcNAc...) asparagine glycosylation is found at asparagine 124, asparagine 190, asparagine 271, and asparagine 342. A heme-binding site is contributed by cysteine 444.

This sequence belongs to the cytochrome P450 family. Heme is required as a cofactor.

The protein localises to the membrane. It functions in the pathway mycotoxin biosynthesis. Cytochrome P450 monooxygenase; part of the gene cluster that mediates the biosynthesis of 11'-deoxyverticillin A, one of the dimeric epipolythiodioxopiperazines (ETPs) from the verticillin family that act as mycotoxins. 11'-deoxyverticillin A is required for normal conidiation. The nonribosomal peptide synthetase verP is speculated to be responsible for condensation of amino acids to form the carbon skeleton of verticillin, whereas the cluster-specific tailoring enzymes are involved in further modifications leading to the production of 11'-deoxyverticillin A. The protein is Cytochrome P450 monooxygenase verC of Clonostachys rogersoniana.